Consider the following 625-residue polypeptide: Thioredoxin domain-containing protein 6 (625 aa).

Residues 158 to 302 (KSYTVAIIKP…FFFPNFKISN (145 aa)) form an NDK region. The disordered stretch occupies residues 594 to 625 (GETPETSASDISRNAAAQGDDPEQDESKEMEE). Residues 613–625 (DDPEQDESKEMEE) show a composition bias toward acidic residues.

This sequence belongs to the NDK family. Monomer and homodimer.

Its subcellular location is the cytoplasm. It localises to the cytoskeleton. The protein resides in the cilium axoneme. The protein localises to the dynein axonemal particle. Its function is as follows. May be a regulator of microtubule physiology. The protein is Thioredoxin domain-containing protein 6 of Xenopus laevis (African clawed frog).